The primary structure comprises 193 residues: Segregation and condensation protein B (193 aa).

Belongs to the ScpB family. In terms of assembly, homodimer. Homodimerization may be required to stabilize the binding of ScpA to the Smc head domains. Component of a cohesin-like complex composed of ScpA, ScpB and the Smc homodimer, in which ScpA and ScpB bind to the head domain of Smc. The presence of the three proteins is required for the association of the complex with DNA.

Its subcellular location is the cytoplasm. Functionally, participates in chromosomal partition during cell division. May act via the formation of a condensin-like complex containing Smc and ScpA that pull DNA away from mid-cell into both cell halves. In Streptococcus thermophilus (strain CNRZ 1066), this protein is Segregation and condensation protein B.